The sequence spans 244 residues: Ras-like protein family member 11B (244 aa).

Positions 19–242 (PSSRVIKIAV…VLSAKVRTVT (224 aa)) are small GTPase-like. Residues 30 to 37 (GGSGVGKT), 77 to 81 (DTPGV), and 142 to 145 (NKAD) contribute to the GTP site. The tract at residues 200–222 (INATSSVTEKKRSPLIPRPKSPN) is disordered.

This sequence belongs to the small GTPase superfamily. Ras family.

The catalysed reaction is GTP + H2O = GDP + phosphate + H(+). The sequence is that of Ras-like protein family member 11B from Danio rerio (Zebrafish).